Consider the following 357-residue polypeptide: DNA integrity scanning protein DisA (357 aa).

Positions 3–141 (RPTLRETVAR…GGERHVVADS (139 aa)) constitute a DAC domain. Residues glycine 70, leucine 88, and 101–105 (TRHRS) each bind ATP.

The protein belongs to the DisA family. Homooctamer. Mg(2+) is required as a cofactor.

It carries out the reaction 2 ATP = 3',3'-c-di-AMP + 2 diphosphate. Participates in a DNA-damage check-point. DisA forms globular foci that rapidly scan along the chromosomes searching for lesions. Functionally, also has diadenylate cyclase activity, catalyzing the condensation of 2 ATP molecules into cyclic di-AMP (c-di-AMP). c-di-AMP likely acts as a signaling molecule that may couple DNA integrity with a cellular process. The polypeptide is DNA integrity scanning protein DisA (Mycolicibacterium paratuberculosis (strain ATCC BAA-968 / K-10) (Mycobacterium paratuberculosis)).